Reading from the N-terminus, the 230-residue chain is Osmotin-like protein PR-5x (230 aa).

Positions 1–25 are cleaved as a signal peptide; it reads MYTNMGYLTSSFIFFFLALVTYTYA. 8 disulfide bridges follow: Cys-34–Cys-229, Cys-76–Cys-86, Cys-91–Cys-97, Cys-145–Cys-217, Cys-150–Cys-200, Cys-158–Cys-168, Cys-172–Cys-181, and Cys-182–Cys-187.

Belongs to the thaumatin family.

Its subcellular location is the secreted. The protein localises to the vacuole. The enzyme catalyses Endohydrolysis of (1-&gt;3)- or (1-&gt;4)-linkages in beta-D-glucans when the glucose residue whose reducing group is involved in the linkage to be hydrolyzed is itself substituted at C-3.. In terms of biological role, antifungal protein. May bind to beta-glucans and have beta-1,3-D-glucanase activity. The protein is Osmotin-like protein PR-5x of Solanum lycopersicum (Tomato).